The following is a 468-amino-acid chain: Citrate synthase, mitochondrial (468 aa).

The N-terminal 30 residues, 1–30 (MSLISAGRVCARILGAKNSPCALIAARQAS), are a transit peptide targeting the mitochondrion. Active-site residues include His303 and His349. Arg358 lines the oxaloacetate pocket. Residue Asp404 is part of the active site. 2 residues coordinate oxaloacetate: Arg430 and Arg450.

Belongs to the citrate synthase family. In terms of assembly, homodimer.

The protein localises to the mitochondrion matrix. The catalysed reaction is oxaloacetate + acetyl-CoA + H2O = citrate + CoA + H(+). It participates in carbohydrate metabolism; tricarboxylic acid cycle; isocitrate from oxaloacetate: step 1/2. Key enzyme of the Krebs tricarboxylic acid cycle which catalyzes the synthesis of citrate from acetyl coenzyme A and oxaloacetate. The protein is Citrate synthase, mitochondrial (cs) of Xenopus laevis (African clawed frog).